The following is a 346-amino-acid chain: Dimethylallyltranstransferase (346 aa).

The isopentenyl diphosphate site is built by K96, R99, and H128. Residues D135 and D141 each contribute to the Mg(2+) site. R147 provides a ligand contact to isopentenyl diphosphate.

This sequence belongs to the FPP/GGPP synthase family. The cofactor is Mg(2+).

It catalyses the reaction isopentenyl diphosphate + dimethylallyl diphosphate = (2E)-geranyl diphosphate + diphosphate. Its pathway is isoprenoid biosynthesis; geranyl diphosphate biosynthesis; geranyl diphosphate from dimethylallyl diphosphate and isopentenyl diphosphate: step 1/1. Its function is as follows. Prenyltransferase involved in the biosynthesis of ambiguines, a family of hapalindole-type alkaloids. Catalyzes the addition of isopentenyl diphosphate (IPP) onto dimethylallyl diphosphate (DMAPP) to form geranyl pyrophosphate (GPP). Cannot use farnesyl diphosphate (FPP) or geranylgeranyl diphosphate (GGPP). The sequence is that of Dimethylallyltranstransferase from Fischerella ambigua (strain UTEX 1903).